The chain runs to 1131 residues: Homeobox-DDT domain protein RLT3 (1131 aa).

A DNA-binding region (homeobox; TALE-type) is located at residues 2–56 (KRKSPLQVQALEGFYLEQMYPTPKEMEDLGKSLGLTLKEVRGWFKRRRSRGKGVK). The span at 239-251 (LQKRSTEKKRRSI) shows a compositional bias: basic residues. Residues 239–264 (LQKRSTEKKRRSIHREAELNKDETQR) form a disordered region. Basic and acidic residues predominate over residues 252–264 (HREAELNKDETQR). A DDT domain is found at 365–424 (PESVKKLFKVVHFLYTYSVTLDIGPFTLDEFTRAFHDKDSLLLGKIHLSLLKLLLLDVET). The disordered stretch occupies residues 579–609 (EDPDKSQSDSDDSGSVDDESDDCSISSGDEI). The segment covering 587–600 (DSDDSGSVDDESDD) has biased composition (acidic residues).

It localises to the nucleus. Functionally, transcriptional regulator required for the maintenance of the plant vegetative phase. May prevent the early activation of the vegetative-to-reproductive transition by regulating key genes that contribute to flower timing. The chain is Homeobox-DDT domain protein RLT3 from Arabidopsis thaliana (Mouse-ear cress).